A 781-amino-acid chain; its full sequence is Molybdenum cofactor sulfurase (781 aa).

An N6-(pyridoxal phosphate)lysine modification is found at K246. C413 is an active-site residue. Residues 619-781 (GDAVAQWLSE…MTCGDVVIVE (163 aa)) form the MOSC domain. The residue at position 734 (S734) is a Phosphoserine.

Belongs to the class-V pyridoxal-phosphate-dependent aminotransferase family. MOCOS subfamily. Pyridoxal 5'-phosphate serves as cofactor.

It catalyses the reaction Mo-molybdopterin + L-cysteine + AH2 = thio-Mo-molybdopterin + L-alanine + A + H2O. It participates in cofactor biosynthesis; molybdopterin biosynthesis. Sulfurates the molybdenum cofactor. Sulfation of molybdenum is essential for xanthine dehydrogenase (XDH) and aldehyde oxidase (ADO) enzymes in which molybdenum cofactor is liganded by 1 oxygen and 1 sulfur atom in active form. In Drosophila erecta (Fruit fly), this protein is Molybdenum cofactor sulfurase.